The chain runs to 427 residues: Peptidase B (427 aa).

Residues Lys195 and Asp200 each coordinate Mn(2+). Residue Lys207 is part of the active site. Residues Asp218, Asp277, and Glu279 each coordinate Mn(2+). Residue Arg281 is part of the active site.

Belongs to the peptidase M17 family. Homohexamer. It depends on Mn(2+) as a cofactor.

The protein localises to the cytoplasm. It catalyses the reaction Release of an N-terminal amino acid, Xaa, from a peptide or arylamide. Xaa is preferably Glu or Asp but may be other amino acids, including Leu, Met, His, Cys and Gln.. Functionally, probably plays an important role in intracellular peptide degradation. The protein is Peptidase B of Salmonella agona (strain SL483).